The sequence spans 403 residues: ESX-5 secretion system protein EccE5 (403 aa).

2 consecutive transmembrane segments (helical) span residues 9–29 (LALS…ILIV) and 43–63 (IAWW…VVTY).

It belongs to the EccE family. Part of the ESX-5 / type VII secretion system (T7SS), which is composed of cytosolic and membrane components. The ESX-5 membrane complex is composed of EccB5, EccC5, EccD5 and EccE5.

The protein localises to the cell inner membrane. In terms of biological role, part of the ESX-5 specialized secretion system, which is responsible for the secretion of EsxN and a number of PE_PGRS and PPE proteins. The protein is ESX-5 secretion system protein EccE5 of Mycobacterium marinum (strain ATCC BAA-535 / M).